Here is a 151-residue protein sequence, read N- to C-terminus: Ribonuclease H (151 aa).

The RNase H type-1 domain occupies 1 to 146; sequence MPDLYAYTDG…ADELARAGMA (146 aa). D9, E52, D74, and D138 together coordinate Mg(2+).

This sequence belongs to the RNase H family. As to quaternary structure, monomer. Mg(2+) serves as cofactor.

The protein localises to the cytoplasm. The catalysed reaction is Endonucleolytic cleavage to 5'-phosphomonoester.. Endonuclease that specifically degrades the RNA of RNA-DNA hybrids. This is Ribonuclease H from Cereibacter sphaeroides (strain ATCC 17029 / ATH 2.4.9) (Rhodobacter sphaeroides).